Reading from the N-terminus, the 282-residue chain is Large ribosomal subunit protein uL2 (282 aa).

The segment at 230-282 (AMNPIDHPLGGGEGRSSGGRHPVSPWGMPAKGYKTRDKKKASSRLIVKRRGQK) is disordered. Basic residues predominate over residues 265 to 282 (RDKKKASSRLIVKRRGQK).

The protein belongs to the universal ribosomal protein uL2 family. In terms of assembly, part of the 50S ribosomal subunit. Forms a bridge to the 30S subunit in the 70S ribosome.

One of the primary rRNA binding proteins. Required for association of the 30S and 50S subunits to form the 70S ribosome, for tRNA binding and peptide bond formation. It has been suggested to have peptidyltransferase activity; this is somewhat controversial. Makes several contacts with the 16S rRNA in the 70S ribosome. The sequence is that of Large ribosomal subunit protein uL2 from Desulfovibrio desulfuricans (strain ATCC 27774 / DSM 6949 / MB).